The sequence spans 209 residues: Kynurenine formamidase (209 aa).

Tryptophan 20 is a binding site for substrate. 3 residues coordinate Zn(2+): histidine 50, histidine 54, and aspartate 56. Histidine 60 functions as the Proton donor/acceptor in the catalytic mechanism. Positions 161 and 173 each coordinate Zn(2+).

It belongs to the Cyclase 1 superfamily. KynB family. Homodimer. Zn(2+) serves as cofactor.

It catalyses the reaction N-formyl-L-kynurenine + H2O = L-kynurenine + formate + H(+). It functions in the pathway amino-acid degradation; L-tryptophan degradation via kynurenine pathway; L-kynurenine from L-tryptophan: step 2/2. Functionally, catalyzes the hydrolysis of N-formyl-L-kynurenine to L-kynurenine, the second step in the kynurenine pathway of tryptophan degradation. The polypeptide is Kynurenine formamidase (Bacillus anthracis).